The following is a 231-amino-acid chain: MLKLQEKLKNDYGLVFNDEDLLKTAFTHSSFTNEERLPKIANNERLEFLGDVALSLVISDYLYRTYPEKLEGELSKMRSSIVRTESLANFSRSCGFGEFLRLGHGEEKMGGRDRETTLENLFEAFLGALFIDQGMDEVRKFIQHVVIPHVKNDDYVKVIDYKTELQEVLQVGGETTITYNILKEEGPAHDRSFVAAVYNNGKELGRGLGKSKKVAEQKAAENAIKGQNHVS.

The region spanning 5-134 (QEKLKNDYGL…FLGALFIDQG (130 aa)) is the RNase III domain. Glu-47 serves as a coordination point for Mg(2+). The active site involves Asp-51. 2 residues coordinate Mg(2+): Asn-120 and Glu-123. Glu-123 is an active-site residue. Residues 160–229 (DYKTELQEVL…AENAIKGQNH (70 aa)) enclose the DRBM domain.

This sequence belongs to the ribonuclease III family. Homodimer. Mg(2+) is required as a cofactor.

It localises to the cytoplasm. The enzyme catalyses Endonucleolytic cleavage to 5'-phosphomonoester.. In terms of biological role, digests double-stranded RNA. Involved in the processing of primary rRNA transcript to yield the immediate precursors to the large and small rRNAs (23S and 16S). Processes some mRNAs, and tRNAs when they are encoded in the rRNA operon. Processes pre-crRNA and tracrRNA of type II CRISPR loci if present in the organism. The protein is Ribonuclease 3 of Lactococcus lactis subsp. cremoris (strain SK11).